A 467-amino-acid chain; its full sequence is Hydroxyacid-oxoacid transhydrogenase, mitochondrial (467 aa).

An N6-acetyllysine modification is found at K445. Residue S452 is modified to Phosphoserine.

Belongs to the iron-containing alcohol dehydrogenase family. Hydroxyacid-oxoacid transhydrogenase subfamily. In terms of tissue distribution, expressed in kidney and liver.

The protein localises to the mitochondrion. It carries out the reaction (S)-3-hydroxybutanoate + 2-oxoglutarate = (R)-2-hydroxyglutarate + acetoacetate. It catalyses the reaction 4-hydroxybutanoate + 2-oxoglutarate = (R)-2-hydroxyglutarate + succinate semialdehyde. Catalyzes the cofactor-independent reversible oxidation of gamma-hydroxybutyrate (GHB) to succinic semialdehyde (SSA) coupled to reduction of 2-ketoglutarate (2-KG) to D-2-hydroxyglutarate (D-2-HG). L-3-hydroxybutyrate (L-3-OHB) is also a substrate for HOT when using 2-KG as hydrogen acceptor, resulting in the formation of D-2-HG. The chain is Hydroxyacid-oxoacid transhydrogenase, mitochondrial (Adhfe1) from Rattus norvegicus (Rat).